A 409-amino-acid chain; its full sequence is Pyruvate dehydrogenase E1 component subunit alpha, mitochondrial (409 aa).

Thr6 carries the phosphothreonine modification. The pyruvate site is built by His109, Tyr135, Arg136, Ala174, Gly182, Val184, Asp213, Gly214, Ala215, Asn242, and Tyr244. Thiamine diphosphate contacts are provided by Tyr135 and Arg136. The thiamine diphosphate site is built by Gly182, Val184, Asp213, Gly214, Ala215, and Asn242. Asp213 serves as a coordination point for Mg(2+). The Mg(2+) site is built by Asn242 and Tyr244. Phosphotyrosine is present on Tyr306. His309 serves as a coordination point for thiamine diphosphate. 2 positions are modified to phosphoserine: Ser310 and Ser312.

As to quaternary structure, tetramer of 2 alpha and 2 beta subunits. Thiamine diphosphate serves as cofactor. The cofactor is Mg(2+).

The protein resides in the mitochondrion matrix. It carries out the reaction N(6)-[(R)-lipoyl]-L-lysyl-[protein] + pyruvate + H(+) = N(6)-[(R)-S(8)-acetyldihydrolipoyl]-L-lysyl-[protein] + CO2. E1 activity is regulated by phosphorylation (inactivation) and dephosphorylation (activation) of the alpha subunit. The pyruvate dehydrogenase complex catalyzes the overall conversion of pyruvate to acetyl-CoA and CO(2). It contains multiple copies of three enzymatic components: pyruvate dehydrogenase (E1), dihydrolipoamide acetyltransferase (E2) and lipoamide dehydrogenase (E3). The protein is Pyruvate dehydrogenase E1 component subunit alpha, mitochondrial (pda1) of Schizosaccharomyces pombe (strain 972 / ATCC 24843) (Fission yeast).